Reading from the N-terminus, the 206-residue chain is N-(5'-phosphoribosyl)anthranilate isomerase (206 aa).

This sequence belongs to the TrpF family.

The catalysed reaction is N-(5-phospho-beta-D-ribosyl)anthranilate = 1-(2-carboxyphenylamino)-1-deoxy-D-ribulose 5-phosphate. It participates in amino-acid biosynthesis; L-tryptophan biosynthesis; L-tryptophan from chorismate: step 3/5. This is N-(5'-phosphoribosyl)anthranilate isomerase from Pseudomonas putida (strain W619).